A 634-amino-acid polypeptide reads, in one-letter code: DNA gyrase subunit B (634 aa).

Positions arginine 416–proline 530 constitute a Toprim domain. 3 residues coordinate Mg(2+): glutamate 422, aspartate 495, and aspartate 497.

This sequence belongs to the type II topoisomerase GyrB family. In terms of assembly, heterotetramer, composed of two GyrA and two GyrB chains. In the heterotetramer, GyrA contains the active site tyrosine that forms a transient covalent intermediate with DNA, while GyrB binds cofactors and catalyzes ATP hydrolysis. Mg(2+) serves as cofactor. Requires Mn(2+) as cofactor. The cofactor is Ca(2+).

It is found in the cytoplasm. It carries out the reaction ATP-dependent breakage, passage and rejoining of double-stranded DNA.. Functionally, a type II topoisomerase that negatively supercoils closed circular double-stranded (ds) DNA in an ATP-dependent manner to modulate DNA topology and maintain chromosomes in an underwound state. Negative supercoiling favors strand separation, and DNA replication, transcription, recombination and repair, all of which involve strand separation. Also able to catalyze the interconversion of other topological isomers of dsDNA rings, including catenanes and knotted rings. Type II topoisomerases break and join 2 DNA strands simultaneously in an ATP-dependent manner. The polypeptide is DNA gyrase subunit B (Borrelia hermsii).